Here is a 467-residue protein sequence, read N- to C-terminus: Congo red hypersensitive protein 2 (467 aa).

A signal peptide spans 1-23; that stretch reads MAIVNSWLICLVSIFSFVVRVEA. Asn-28 carries an N-linked (GlcNAc...) asparagine glycan. A disulfide bond links Cys-56 and Cys-67. In terms of domain architecture, GH16 spans 63–280; that stretch reads SHDSCMPVPI…WSGGEINWDA (218 aa). Asn-96 is a glycosylation site (N-linked (GlcNAc...) asparagine). Glu-166 functions as the Nucleophile in the catalytic mechanism. Residue Glu-170 is the Proton donor of the active site. Glu-170 is a binding site for chitin. Residues Asn-190, Asn-196, Asn-233, and Asn-237 are each glycosylated (N-linked (GlcNAc...) asparagine). Trp-257 provides a ligand contact to chitin. An N-linked (GlcNAc...) asparagine glycan is attached at Asn-261. A chitin-binding site is contributed by Thr-268. Asn-297 and Asn-310 each carry an N-linked (GlcNAc...) asparagine glycan. Residues 337 to 444 are disordered; sequence MDSDEGSGLD…SSSTSSMSGN (108 aa). A compositionally biased stretch (low complexity) spans 351-444; it reads ATTSSTQKSS…SSSTSSMSGN (94 aa). The GPI-anchor amidated asparagine moiety is linked to residue Asn-445. The propeptide at 446-467 is removed in mature form; sequence AGANVAANWRLTVLCVILGYVL.

It belongs to the glycosyl hydrolase 16 family. CRH1 subfamily. Post-translationally, the GPI-anchor is attached to the protein in the endoplasmic reticulum and serves to target the protein to the cell surface. There, the glucosamine-inositol phospholipid moiety is cleaved off and the GPI-modified mannoprotein is covalently attached via its lipidless GPI glycan remnant to the 1,6-beta-glucan of the outer cell wall layer.

The protein localises to the secreted. The protein resides in the cell wall. It is found in the membrane. It catalyses the reaction Random endo-hydrolysis of N-acetyl-beta-D-glucosaminide (1-&gt;4)-beta-linkages in chitin and chitodextrins.. In terms of biological role, dual chitinase/transglycosylase that plays a role in cell wall architecture. Chitinase and transglycosylase activities are coupled. Required for the polysaccharide cross-linking at the septa and the cell wall. More specifically, transfers chitin to both beta(1-3)- and beta(1-6)glucan in the cell wall. The minimal number of intact hexopyranose units required in the molecule of the acceptor oligosaccharide is two and the effectivity of the acceptor increased with the increasing length of its oligosaccharide chain. The chain is Congo red hypersensitive protein 2 from Saccharomyces cerevisiae (strain ATCC 204508 / S288c) (Baker's yeast).